The primary structure comprises 101 residues: Integration host factor subunit alpha (101 aa).

The interval 49–70 (FGNFQLRDKPQRPGRNPKTGEE) is disordered.

It belongs to the bacterial histone-like protein family. Heterodimer of an alpha and a beta chain.

This protein is one of the two subunits of integration host factor, a specific DNA-binding protein that functions in genetic recombination as well as in transcriptional and translational control. The protein is Integration host factor subunit alpha of Nitrosospira multiformis (strain ATCC 25196 / NCIMB 11849 / C 71).